Reading from the N-terminus, the 298-residue chain is MLYQQIARNKRKTALIMVLFVVILTLVGAGLGYLFSNRPWMGIIIALAGSLIYLLIMWQNPANMIMSLNHAQEIQEADNPELWHIVEDMAMVARVPMPRVYIIPDPSPNAFATGRDPNHSAVAVTEGILQLMNREELEGVLGHELSHVRNYDILLSTIAVVLVGVISFISGMASRYIWFAGGSRDSDDDRDSNAFEMIFKVVAIVFVLILGPLSASLAQMALSRNREYLADASSVELTRNPQGLISALRKIENSQPMKQADRSSAGLYIENPFHNHGLSHLFDTHPPTEDRIKRLEQM.

A run of 2 helical transmembrane segments spans residues 15–35 (LIMV…GYLF) and 39–59 (PWMG…IMWQ). Residue His143 participates in Zn(2+) binding. Glu144 is an active-site residue. Residue His147 participates in Zn(2+) binding. Transmembrane regions (helical) follow at residues 153 to 173 (ILLS…SGMA) and 197 to 217 (MIFK…SASL). Glu227 is a Zn(2+) binding site.

It belongs to the peptidase M48B family. Zn(2+) is required as a cofactor.

It localises to the cell membrane. This is Protease HtpX homolog from Lactobacillus helveticus (strain DPC 4571).